A 440-amino-acid polypeptide reads, in one-letter code: Thymidine phosphorylase (440 aa).

This sequence belongs to the thymidine/pyrimidine-nucleoside phosphorylase family. Homodimer.

It catalyses the reaction thymidine + phosphate = 2-deoxy-alpha-D-ribose 1-phosphate + thymine. Its pathway is pyrimidine metabolism; dTMP biosynthesis via salvage pathway; dTMP from thymine: step 1/2. In terms of biological role, the enzymes which catalyze the reversible phosphorolysis of pyrimidine nucleosides are involved in the degradation of these compounds and in their utilization as carbon and energy sources, or in the rescue of pyrimidine bases for nucleotide synthesis. In Salmonella schwarzengrund (strain CVM19633), this protein is Thymidine phosphorylase.